Consider the following 827-residue polypeptide: SID1 transmembrane family member 1 (827 aa).

The N-terminal stretch at 1-19 is a signal peptide; that stretch reads MLDCLRLALLCALPWLLRA. The Extracellular portion of the chain corresponds to 20–309; sequence AVPGHQEEPL…SIKESVYVKS (290 aa). N-linked (GlcNAc...) asparagine glycosylation is found at Asn-67, Asn-83, Asn-136, and Asn-282. Residues 310 to 330 form a helical membrane-spanning segment; that stretch reads SLFSIFVFLSFYLGCLLVVLV. The Cytoplasmic portion of the chain corresponds to 331–442; sequence HHVRFQRKSI…DRRIVSKKYK (112 aa). The segment at 344 to 409 is disordered; sequence FGSSDGSGNM…VEESDFDTMP (66 aa). The segment covering 375 to 386 has biased composition (low complexity); the sequence is SSSSPGRQMSSS. The segment covering 398-409 has biased composition (acidic residues); the sequence is SSVEESDFDTMP. The helical transmembrane segment at 443-463 threads the bilayer; the sequence is IYFWNIITIAVFYALPVMQLV. Residues 464-494 lie on the Extracellular side of the membrane; the sequence is ITYQTVVNVTGNQDICYYNFLCAHPLGVLSA. N-linked (GlcNAc...) asparagine glycosylation occurs at Asn-471. Residues 495–515 form a helical membrane-spanning segment; the sequence is FNNILSNLGHVLLGFLFLLIV. The Cytoplasmic portion of the chain corresponds to 516–541; it reads LRRDLLHRRALEAKDIFAMEYGIPKH. Residues 542–562 form a helical membrane-spanning segment; the sequence is FGLFYAMGIALMMEGVLSACY. Residues 563 to 572 lie on the Extracellular side of the membrane; that stretch reads HVCPNYSNFQ. The N-linked (GlcNAc...) asparagine glycan is linked to Asn-567. A helical membrane pass occupies residues 573-590; that stretch reads FDTSFMYMIAGLCMLKLY. The Cytoplasmic portion of the chain corresponds to 591–600; it reads QTRHPDINAS. Residues 601–621 traverse the membrane as a helical segment; it reads AYSAYASFAVVITLTVLGVVF. The Extracellular portion of the chain corresponds to 622–626; that stretch reads GKNDV. A helical transmembrane segment spans residues 627 to 647; that stretch reads WFWIIFSAIHILSSLALSTQI. The Cytoplasmic segment spans residues 648 to 683; it reads YYMGRFKIDLGIFRRAAMVFYTDCIQQCSRPLYMDR. A helical membrane pass occupies residues 684–704; it reads MVLLIVGNLVNWSFAFFGLIY. Residues 705–710 lie on the Extracellular side of the membrane; the sequence is RPRDFA. The chain crosses the membrane as a helical span at residues 711–731; it reads SYMLGIFICNLLLYLAFYIIM. The Cytoplasmic segment spans residues 732–741; that stretch reads KLRSSEKVLP. Residues 742-762 form a helical membrane-spanning segment; it reads LPVFCIAATAVVWAAALYFFF. At 763–791 the chain is on the extracellular side; it reads QNLSSWEGTPAESREKNRECVLLDFFDDH. Asn-764 carries N-linked (GlcNAc...) asparagine glycosylation. The helical transmembrane segment at 792–812 threads the bilayer; sequence DIWHFLSATALFFSFLVLLTL. Residues 813-827 are Cytoplasmic-facing; the sequence is DDDLDVVRRDQIPVF.

Belongs to the SID1 family.

It localises to the membrane. In vitro binds long double-stranded RNA (dsRNA) (500 and 700 base pairs), but not dsRNA shorter than 300 bp. Not involved in RNA autophagy, a process in which RNA is directly imported into lysosomes in an ATP-dependent manner, and degraded. This Mus musculus (Mouse) protein is SID1 transmembrane family member 1 (Sidt1).